Consider the following 654-residue polypeptide: tRNA 5-methylaminomethyl-2-thiouridine biosynthesis bifunctional protein MnmC (654 aa).

Residues 1–236 form a tRNA (mnm(5)s(2)U34)-methyltransferase region; that stretch reads MSTLLQHAQI…KWEVMSGAYV (236 aa). An FAD-dependent cmnm(5)s(2)U34 oxidoreductase region spans residues 262-654; the sequence is IGAGLAGSTT…FALRRLIRGK (393 aa).

In the N-terminal section; belongs to the methyltransferase superfamily. tRNA (mnm(5)s(2)U34)-methyltransferase family. This sequence in the C-terminal section; belongs to the DAO family. It depends on FAD as a cofactor.

Its subcellular location is the cytoplasm. The enzyme catalyses 5-aminomethyl-2-thiouridine(34) in tRNA + S-adenosyl-L-methionine = 5-methylaminomethyl-2-thiouridine(34) in tRNA + S-adenosyl-L-homocysteine + H(+). Its function is as follows. Catalyzes the last two steps in the biosynthesis of 5-methylaminomethyl-2-thiouridine (mnm(5)s(2)U) at the wobble position (U34) in tRNA. Catalyzes the FAD-dependent demodification of cmnm(5)s(2)U34 to nm(5)s(2)U34, followed by the transfer of a methyl group from S-adenosyl-L-methionine to nm(5)s(2)U34, to form mnm(5)s(2)U34. The sequence is that of tRNA 5-methylaminomethyl-2-thiouridine biosynthesis bifunctional protein MnmC from Pseudomonas putida (strain GB-1).